Reading from the N-terminus, the 315-residue chain is Transaldolase (315 aa).

Lysine 125 functions as the Schiff-base intermediate with substrate in the catalytic mechanism.

Belongs to the transaldolase family. Type 1 subfamily. As to quaternary structure, homodimer.

Its subcellular location is the cytoplasm. The catalysed reaction is D-sedoheptulose 7-phosphate + D-glyceraldehyde 3-phosphate = D-erythrose 4-phosphate + beta-D-fructose 6-phosphate. Its pathway is carbohydrate degradation; pentose phosphate pathway; D-glyceraldehyde 3-phosphate and beta-D-fructose 6-phosphate from D-ribose 5-phosphate and D-xylulose 5-phosphate (non-oxidative stage): step 2/3. Functionally, transaldolase is important for the balance of metabolites in the pentose-phosphate pathway. This Polaromonas naphthalenivorans (strain CJ2) protein is Transaldolase.